A 329-amino-acid polypeptide reads, in one-letter code: Fructose-1,6-bisphosphatase class 1 (329 aa).

Mg(2+) is bound by residues glutamate 84, aspartate 103, leucine 105, and aspartate 106. Residues 106–109 (DGSS), asparagine 196, and lysine 262 each bind substrate. Mg(2+) is bound at residue glutamate 268.

It belongs to the FBPase class 1 family. Homotetramer. The cofactor is Mg(2+).

It is found in the cytoplasm. The catalysed reaction is beta-D-fructose 1,6-bisphosphate + H2O = beta-D-fructose 6-phosphate + phosphate. It participates in carbohydrate biosynthesis; gluconeogenesis. The protein is Fructose-1,6-bisphosphatase class 1 of Shewanella sediminis (strain HAW-EB3).